Here is a 415-residue protein sequence, read N- to C-terminus: MATH domain and coiled-coil domain-containing protein At2g42465 (415 aa).

Residues 6–130 (RKALTLTVTN…NDRFNIEIYI (125 aa)) form the MATH domain. Residues 244–341 (FKLEWLKAKL…LLKDTYSDLK (98 aa)) are a coiled coil.

This is MATH domain and coiled-coil domain-containing protein At2g42465 from Arabidopsis thaliana (Mouse-ear cress).